Here is a 22-residue protein sequence, read N- to C-terminus: 5-methyltetrahydropteroyltriglutamate--homocysteine methyltransferase (22 aa).

This sequence belongs to the vitamin-B12 independent methionine synthase family. Requires Zn(2+) as cofactor.

Its subcellular location is the cytoplasm. The catalysed reaction is 5-methyltetrahydropteroyltri-L-glutamate + L-homocysteine = tetrahydropteroyltri-L-glutamate + L-methionine. Its pathway is amino-acid biosynthesis; L-methionine biosynthesis via de novo pathway; L-methionine from L-homocysteine (MetE route): step 1/1. Functionally, catalyzes the transfer of a methyl group from 5-methyltetrahydrofolate to homocysteine resulting in methionine formation. The polypeptide is 5-methyltetrahydropteroyltriglutamate--homocysteine methyltransferase (Pseudotsuga menziesii (Douglas-fir)).